Consider the following 179-residue polypeptide: Interleukin-10 (179 aa).

The signal sequence occupies residues 1 to 19; that stretch reads MPSSSALLCCLVFLAGVAA. 2 disulfides stabilise this stretch: C31/C127 and C81/C133. N135 carries an N-linked (GlcNAc...) asparagine glycan.

The protein belongs to the IL-10 family. As to quaternary structure, homodimer. Interacts with IL10RA and IL10RB.

The protein resides in the secreted. Major immune regulatory cytokine that acts on many cells of the immune system where it has profound anti-inflammatory functions, limiting excessive tissue disruption caused by inflammation. Mechanistically, IL10 binds to its heterotetrameric receptor comprising IL10RA and IL10RB leading to JAK1 and STAT2-mediated phosphorylation of STAT3. In turn, STAT3 translocates to the nucleus where it drives expression of anti-inflammatory mediators. Targets antigen-presenting cells (APCs) such as macrophages and monocytes and inhibits their release of pro-inflammatory cytokines including granulocyte-macrophage colony-stimulating factor /GM-CSF, granulocyte colony-stimulating factor/G-CSF, IL-1 alpha, IL-1 beta, IL-6, IL-8 and TNF-alpha. Also interferes with antigen presentation by reducing the expression of MHC-class II and co-stimulatory molecules, thereby inhibiting their ability to induce T cell activation. In addition, controls the inflammatory response of macrophages by reprogramming essential metabolic pathways including mTOR signaling. This chain is Interleukin-10 (IL10), found in Cervus elaphus (Red deer).